Consider the following 121-residue polypeptide: MLKCTTRHVHIFAGEVTADNHFVPRDDLLTLDVDPDNELVWNDAALQKVYARFEELVEEYRGRDLTEYNLRRIGSDLEHFIRSLLKQGEIAYNLQGRTPNYSMGFPQIPAEEIVGQYIPKG.

Belongs to the complex I NdhM subunit family. NDH-1 can be composed of about 15 different subunits; different subcomplexes with different compositions have been identified which probably have different functions.

Its subcellular location is the cellular thylakoid membrane. The catalysed reaction is a plastoquinone + NADH + (n+1) H(+)(in) = a plastoquinol + NAD(+) + n H(+)(out). It catalyses the reaction a plastoquinone + NADPH + (n+1) H(+)(in) = a plastoquinol + NADP(+) + n H(+)(out). Functionally, NDH-1 shuttles electrons from an unknown electron donor, via FMN and iron-sulfur (Fe-S) centers, to quinones in the respiratory and/or the photosynthetic chain. The immediate electron acceptor for the enzyme in this species is believed to be plastoquinone. Couples the redox reaction to proton translocation, and thus conserves the redox energy in a proton gradient. Cyanobacterial NDH-1 also plays a role in inorganic carbon-concentration. The protein is NAD(P)H-quinone oxidoreductase subunit M of Synechococcus sp. (strain JA-3-3Ab) (Cyanobacteria bacterium Yellowstone A-Prime).